The following is a 98-amino-acid chain: NADH-ubiquinone oxidoreductase chain 4L (98 aa).

Transmembrane regions (helical) follow at residues 1 to 21 (MTMV…GLLM), 29 to 49 (SLLC…ITIL), and 61 to 81 (IILL…LVMV).

Belongs to the complex I subunit 4L family. In terms of assembly, core subunit of respiratory chain NADH dehydrogenase (Complex I) which is composed of 45 different subunits.

It is found in the mitochondrion inner membrane. It carries out the reaction a ubiquinone + NADH + 5 H(+)(in) = a ubiquinol + NAD(+) + 4 H(+)(out). Its function is as follows. Core subunit of the mitochondrial membrane respiratory chain NADH dehydrogenase (Complex I) which catalyzes electron transfer from NADH through the respiratory chain, using ubiquinone as an electron acceptor. Part of the enzyme membrane arm which is embedded in the lipid bilayer and involved in proton translocation. This is NADH-ubiquinone oxidoreductase chain 4L (MT-ND4L) from Ommatophoca rossii (Ross seal).